The sequence spans 416 residues: Basic salivary proline-rich protein 2 (416 aa).

The first 16 residues, 1–16 (MLLILLSVALLALSSA), serve as a signal peptide directing secretion. Position 17 is a pyrrolidone carboxylic acid (Q17). Residues 19 to 28 (LNEDVSQEES) show a composition bias toward polar residues. The segment at 19-416 (LNEDVSQEES…QGGRPSRPPQ (398 aa)) is disordered. S24 is subject to Phosphoserine. The segment covering 34–47 (GNPQGAPPQGGNKP) has biased composition (low complexity). Pro residues-rich tracts occupy residues 48 to 104 (QGPP…PPPQ) and 112 to 165 (RSPP…PPPQ). S52 carries the phosphoserine modification. 15 repeat units span residues 53 to 72 (PPGK…QGPP), 74 to 93 (PPGK…QGPP), 94 to 113 (PPGK…SPRS), 114 to 133 (PPGK…QGPP), 135 to 154 (PPGK…QGPP), 155 to 174 (PPGK…RSSR), 176 to 195 (PPGK…QGPP), 197 to 216 (PPGK…QGPP), 217 to 236 (PPGK…QSAR), 238 to 257 (PPGK…QGPP), 259 to 278 (PPGK…QGPP), 279 to 298 (PPGK…RSSR), 300 to 319 (PPGK…QGPP), 321 to 340 (PPGK…QGPP), and 341 to 360 (PPGK…RSAR). Positions 53–360 (PPGKPQGPPP…QGGSKSRSAR (308 aa)) are 15 X 20 AA approximate tandem repeats of P-P-G-K-P-Q-G-P-P-P-Q-G-[GD]-[NKS]-[KSQ]-[PRS]-[QRS] [GPS]-[PSAR]-[PSR]. N168 is a glycosylation site (N-linked (GlcNAc...) asparagine). Residues 177–227 (PGKPQGPPPQGGNQPQGPPPPPGKPQGPPPQGGNKPQGPPPPGKPQGPPPQ) show a composition bias toward pro residues. N230 carries N-linked (GlcNAc...) asparagine glycosylation. S232 carries O-linked (Hex) serine glycosylation. Positions 239-289 (PGKPQGPPPQGGNQPQGPPPPPGKPQGPPPQGGNKPQGPPPPGKPQGPPPQ) are enriched in pro residues. An N-linked (GlcNAc...) asparagine glycan is attached at N272. Residues 290 to 300 (GGSKSRSSRSP) show a composition bias toward low complexity. Composition is skewed to pro residues over residues 301 to 351 (PGKP…PPPQ) and 378 to 416 (QGPP…RPPQ).

Post-translationally, N- and O-glycosylated. In head and neck cancer patients, O-glycosylated with glucosylgalactosyl carbohydrate moiety. This modification would require prior hydroxylation on the lysine residue. In terms of processing, proteolytically cleaved at the tripeptide Xaa-Pro-Gln, where Xaa in the P(3) position is mostly lysine. The endoprotease may be of microbial origin. Pyroglutamate formation occurs on terminal Gln residues of cleaved peptides. Pyroglutamate formation found on at least Gln-398 and Gln-400.

Its subcellular location is the secreted. The polypeptide is Basic salivary proline-rich protein 2 (PRB2) (Homo sapiens (Human)).